Reading from the N-terminus, the 334-residue chain is HTH-type transcriptional repressor PurR (334 aa).

The HTH lacI-type domain maps to 2–56 (ATIKDVAKMAGVSTTTVSHVINKTRHVADETKQTVLDAIKALNYSPSAVARSLKV). The H-T-H motif DNA-binding region spans 4–23 (IKDVAKMAGVSTTTVSHVIN). Residues 48–56 (SAVARSLKV) mediate DNA binding. Tyr73, Lys189, Thr191, Phe220, and Asp274 together coordinate hypoxanthine.

As to quaternary structure, homodimer.

It participates in purine metabolism; purine nucleotide biosynthesis [regulation]. In terms of biological role, is the main repressor of the genes involved in the de novo synthesis of purine nucleotides, regulating purB, purC, purEK, purF, purHD, purL, purMN and guaBA expression. PurR is allosterically activated to bind its cognate DNA by binding the purine corepressors, hypoxanthine or guanine, thereby effecting transcription repression. The protein is HTH-type transcriptional repressor PurR of Mannheimia succiniciproducens (strain KCTC 0769BP / MBEL55E).